The sequence spans 156 residues: Small ribosomal subunit protein uS7 (156 aa).

The protein belongs to the universal ribosomal protein uS7 family. Part of the 30S ribosomal subunit. Contacts proteins S9 and S11.

In terms of biological role, one of the primary rRNA binding proteins, it binds directly to 16S rRNA where it nucleates assembly of the head domain of the 30S subunit. Is located at the subunit interface close to the decoding center, probably blocks exit of the E-site tRNA. In Dehalococcoides mccartyi (strain ATCC BAA-2266 / KCTC 15142 / 195) (Dehalococcoides ethenogenes (strain 195)), this protein is Small ribosomal subunit protein uS7.